The primary structure comprises 515 residues: MDEFHRYGKEDSSWQQCFLYPLFFQEDLYAISHDHYLDGSSSSEPMEHLSSNDQFSFLTVKRLIGQIRQQNHSIVLFVNCDPNPLVDRKKSSYSESVLEGLTLVLEVPFSIRSKYSVEGMNEWKSFRSIHSIFPFLEDKFPHSNYVSDTRIPYSIHPEILVRTFRRWIGDAPSLHPLRSILYEYRNSSESLQRSIIVVPKVNTRFFLFLWNNYVYECESILVSLLKRSSHSRSLSHGSFPQRTHFHRKIKNIFLFSRRNSFQSIWSLKDPNIHYVRYGERSIIAIKGTHLLVKKYRYYLPIFRQCYFHLWNEPYRVCFHQLSKNCSSSLGYFLRVRMKPLLVKTKMLDELFIADLITDEFDPIVPIVPIIGLLSREKFCDISGRPISKLSWTSLTDDDILDRFDRIWRNLFHYYSGSFGRDGLYRIKYILSLSCAKTLACKHKSTIRVVRKELGPELFKKSFSKERELDSPPFSSKAAARSQRERIWHSDIPQINPLAHSWQKIQDLKIENLFDQ.

Belongs to the intron maturase 2 family. MatK subfamily.

It localises to the plastid. Its subcellular location is the chloroplast. In terms of biological role, usually encoded in the trnK tRNA gene intron. Probably assists in splicing its own and other chloroplast group II introns. This is Maturase K from Picea abies (Norway spruce).